The following is a 448-amino-acid chain: UDP-N-acetylmuramoylalanine--D-glutamate ligase (448 aa).

116 to 122 (GSNAKST) contacts ATP.

This sequence belongs to the MurCDEF family.

It localises to the cytoplasm. It carries out the reaction UDP-N-acetyl-alpha-D-muramoyl-L-alanine + D-glutamate + ATP = UDP-N-acetyl-alpha-D-muramoyl-L-alanyl-D-glutamate + ADP + phosphate + H(+). The protein operates within cell wall biogenesis; peptidoglycan biosynthesis. In terms of biological role, cell wall formation. Catalyzes the addition of glutamate to the nucleotide precursor UDP-N-acetylmuramoyl-L-alanine (UMA). The chain is UDP-N-acetylmuramoylalanine--D-glutamate ligase from Pseudomonas syringae pv. syringae (strain B728a).